Consider the following 109-residue polypeptide: Heterogeneous nuclear ribonucleoprotein-like protein HD40 (109 aa).

The segment at 1–36 (EEVSNGQEHTEGMXQGEXNXIXVEEHHEGEKNSHLV) is disordered. Residues 23-36 (VEEHHEGEKNSHLV) show a composition bias toward basic and acidic residues. An RRM domain is found at 40 to 50 (EEKKLFVGALS). An asymmetric dimethylarginine mark is found at Arg102 and Arg105.

The protein resides in the cytoplasm. The protein localises to the nucleus. In Artemia salina (Brine shrimp), this protein is Heterogeneous nuclear ribonucleoprotein-like protein HD40.